The chain runs to 281 residues: sn-glycerol-3-phosphate transport system permease protein UgpE (281 aa).

6 helical membrane-spanning segments follow: residues 16 to 36, 85 to 105, 113 to 133, 142 to 162, 202 to 222, and 247 to 267; these read LILGIAVILFPLYVAFVAATL, FSITLGKITVSMLSAFAIVWF, FFWMIFITLMLPVEVRIFPTV, LDSYAGLTLPLMASATATFLF, ALFVITFIYGWNQYLWPLLII, and WNSVMAAMLLTLIPPVVIVLV. In terms of domain architecture, ABC transmembrane type-1 spans 77–268; sequence LLNSFVMAFS…IPPVVIVLVM (192 aa).

The protein belongs to the binding-protein-dependent transport system permease family. UgpAE subfamily. In terms of assembly, the complex is composed of two ATP-binding proteins (UgpC), two transmembrane proteins (UgpA and UgpE) and a solute-binding protein (UgpB).

The protein resides in the cell inner membrane. Part of the ABC transporter complex UgpBAEC involved in sn-glycerol-3-phosphate (G3P) import. Probably responsible for the translocation of the substrate across the membrane. This Escherichia coli O157:H7 protein is sn-glycerol-3-phosphate transport system permease protein UgpE (ugpE).